We begin with the raw amino-acid sequence, 45 residues long: FKBP-type peptidyl-prolyl cis-trans isomerase, chloroplastic (45 aa).

It belongs to the FKBP-type PPIase family. In terms of tissue distribution, expressed in leaves, but not in roots.

Its subcellular location is the plastid. The protein resides in the chloroplast thylakoid lumen. It carries out the reaction [protein]-peptidylproline (omega=180) = [protein]-peptidylproline (omega=0). PPIases accelerate the folding of proteins. It catalyzes the cis-trans isomerization of proline imidic peptide bonds in oligopeptides. The polypeptide is FKBP-type peptidyl-prolyl cis-trans isomerase, chloroplastic (Vicia faba (Broad bean)).